Reading from the N-terminus, the 530-residue chain is BTB/POZ domain-containing protein 3 (530 aa).

The segment at 23 to 48 (KNRSKKGSKKANSSGGGGGGGSVGSG) is disordered. Residues 36-46 (SGGGGGGGSVG) are compositionally biased toward gly residues. One can recognise a BTB domain in the interval 128-198 (ADVHFVVGPP…IYCDEIDLAA (71 aa)). In terms of domain architecture, BACK spans 243 to 308 (FEEPDLTQRC…NWAEVECQRQ (66 aa)).

In terms of tissue distribution, in the somatosensory cortex, specifically expressed in spiny stellate neurons during barrel formation. Also expressed in the olfactory bulb, piriform cortex and hippocampus.

It localises to the cytoplasm. It is found in the cytosol. The protein resides in the nucleus. Its function is as follows. Acts as a key regulator of dendritic field orientation during development of sensory cortex. Also directs dendrites toward active axon terminals when ectopically expressed. The sequence is that of BTB/POZ domain-containing protein 3 (Btbd3) from Mus musculus (Mouse).